The primary structure comprises 471 residues: tRNA(Ile)-lysidine synthase (471 aa).

Position 35-40 (35-40) interacts with ATP; it reads SGGADS.

This sequence belongs to the tRNA(Ile)-lysidine synthase family.

It is found in the cytoplasm. It carries out the reaction cytidine(34) in tRNA(Ile2) + L-lysine + ATP = lysidine(34) in tRNA(Ile2) + AMP + diphosphate + H(+). Its function is as follows. Ligates lysine onto the cytidine present at position 34 of the AUA codon-specific tRNA(Ile) that contains the anticodon CAU, in an ATP-dependent manner. Cytidine is converted to lysidine, thus changing the amino acid specificity of the tRNA from methionine to isoleucine. This Geobacter sulfurreducens (strain ATCC 51573 / DSM 12127 / PCA) protein is tRNA(Ile)-lysidine synthase.